Here is a 188-residue protein sequence, read N- to C-terminus: Elongation factor P (188 aa).

Residue K34 is modified to N6-(3,6-diaminohexanoyl)-5-hydroxylysine.

Belongs to the elongation factor P family. In terms of processing, may be beta-lysylated on the epsilon-amino group of Lys-34 by the combined action of EpmA and EpmB, and then hydroxylated on the C5 position of the same residue by EpmC (if this protein is present). Lysylation is critical for the stimulatory effect of EF-P on peptide-bond formation. The lysylation moiety may extend toward the peptidyltransferase center and stabilize the terminal 3-CCA end of the tRNA. Hydroxylation of the C5 position on Lys-34 may allow additional potential stabilizing hydrogen-bond interactions with the P-tRNA.

Its subcellular location is the cytoplasm. It functions in the pathway protein biosynthesis; polypeptide chain elongation. In terms of biological role, involved in peptide bond synthesis. Alleviates ribosome stalling that occurs when 3 or more consecutive Pro residues or the sequence PPG is present in a protein, possibly by augmenting the peptidyl transferase activity of the ribosome. Modification of Lys-34 is required for alleviation. In Vibrio cholerae serotype O1 (strain ATCC 39541 / Classical Ogawa 395 / O395), this protein is Elongation factor P.